We begin with the raw amino-acid sequence, 101 residues long: NADH-quinone oxidoreductase subunit K (101 aa).

3 consecutive transmembrane segments (helical) span residues 4–24 (LAHF…GIFL), 30–50 (IVLL…FVAF), and 61–81 (VFVF…LAIL).

It belongs to the complex I subunit 4L family. NDH-1 is composed of 14 different subunits. Subunits NuoA, H, J, K, L, M, N constitute the membrane sector of the complex.

Its subcellular location is the cell inner membrane. The catalysed reaction is a quinone + NADH + 5 H(+)(in) = a quinol + NAD(+) + 4 H(+)(out). Functionally, NDH-1 shuttles electrons from NADH, via FMN and iron-sulfur (Fe-S) centers, to quinones in the respiratory chain. The immediate electron acceptor for the enzyme in this species is believed to be ubiquinone. Couples the redox reaction to proton translocation (for every two electrons transferred, four hydrogen ions are translocated across the cytoplasmic membrane), and thus conserves the redox energy in a proton gradient. The protein is NADH-quinone oxidoreductase subunit K of Cupriavidus necator (strain ATCC 17699 / DSM 428 / KCTC 22496 / NCIMB 10442 / H16 / Stanier 337) (Ralstonia eutropha).